The chain runs to 76 residues: UPF0346 protein lhv_1069 (76 aa).

The protein belongs to the UPF0346 family.

This chain is UPF0346 protein lhv_1069, found in Lactobacillus helveticus (strain DPC 4571).